Consider the following 262-residue polypeptide: Phosphatidylserine decarboxylase proenzyme (262 aa).

Residues aspartate 86, histidine 142, and serine 226 each act as charge relay system; for autoendoproteolytic cleavage activity in the active site. Serine 226 acts as the Schiff-base intermediate with substrate; via pyruvic acid; for decarboxylase activity in catalysis. Serine 226 bears the Pyruvic acid (Ser); by autocatalysis mark.

It belongs to the phosphatidylserine decarboxylase family. PSD-B subfamily. Prokaryotic type I sub-subfamily. Heterodimer of a large membrane-associated beta subunit and a small pyruvoyl-containing alpha subunit. Pyruvate serves as cofactor. In terms of processing, is synthesized initially as an inactive proenzyme. Formation of the active enzyme involves a self-maturation process in which the active site pyruvoyl group is generated from an internal serine residue via an autocatalytic post-translational modification. Two non-identical subunits are generated from the proenzyme in this reaction, and the pyruvate is formed at the N-terminus of the alpha chain, which is derived from the carboxyl end of the proenzyme. The autoendoproteolytic cleavage occurs by a canonical serine protease mechanism, in which the side chain hydroxyl group of the serine supplies its oxygen atom to form the C-terminus of the beta chain, while the remainder of the serine residue undergoes an oxidative deamination to produce ammonia and the pyruvoyl prosthetic group on the alpha chain. During this reaction, the Ser that is part of the protease active site of the proenzyme becomes the pyruvoyl prosthetic group, which constitutes an essential element of the active site of the mature decarboxylase.

It localises to the cell membrane. The enzyme catalyses a 1,2-diacyl-sn-glycero-3-phospho-L-serine + H(+) = a 1,2-diacyl-sn-glycero-3-phosphoethanolamine + CO2. Its pathway is phospholipid metabolism; phosphatidylethanolamine biosynthesis; phosphatidylethanolamine from CDP-diacylglycerol: step 2/2. Catalyzes the formation of phosphatidylethanolamine (PtdEtn) from phosphatidylserine (PtdSer). The sequence is that of Phosphatidylserine decarboxylase proenzyme from Bacillus cereus (strain ZK / E33L).